Reading from the N-terminus, the 376-residue chain is Chaperone protein DnaJ (376 aa).

The J domain occupies 5-69 (DYYEVLGVSK…QKRAQYDQYG (65 aa)). A CR-type zinc finger spans residues 133 to 215 (GKDAEIEIPR…CHGKGRVTKT (83 aa)). Zn(2+)-binding residues include C146, C149, C163, C166, C189, C192, C203, and C206. CXXCXGXG motif repeat units follow at residues 146 to 153 (CDTCHGSG), 163 to 170 (CSHCGGKG), 189 to 196 (CQYCNGTG), and 203 to 210 (CPTCHGKG).

It belongs to the DnaJ family. As to quaternary structure, homodimer. The cofactor is Zn(2+).

The protein resides in the cytoplasm. In terms of biological role, participates actively in the response to hyperosmotic and heat shock by preventing the aggregation of stress-denatured proteins and by disaggregating proteins, also in an autonomous, DnaK-independent fashion. Unfolded proteins bind initially to DnaJ; upon interaction with the DnaJ-bound protein, DnaK hydrolyzes its bound ATP, resulting in the formation of a stable complex. GrpE releases ADP from DnaK; ATP binding to DnaK triggers the release of the substrate protein, thus completing the reaction cycle. Several rounds of ATP-dependent interactions between DnaJ, DnaK and GrpE are required for fully efficient folding. Also involved, together with DnaK and GrpE, in the DNA replication of plasmids through activation of initiation proteins. The polypeptide is Chaperone protein DnaJ (Listeria monocytogenes serotype 4b (strain CLIP80459)).